Consider the following 86-residue polypeptide: Large ribosomal subunit protein bL27 (86 aa).

The tract at residues 1–23 is disordered; that stretch reads MAHKKGTGSTRNGRDSNSKRLGV.

It belongs to the bacterial ribosomal protein bL27 family.

This is Large ribosomal subunit protein bL27 from Prochlorococcus marinus (strain MIT 9515).